A 144-amino-acid chain; its full sequence is Large ribosomal subunit protein uL13 (144 aa).

Belongs to the universal ribosomal protein uL13 family. As to quaternary structure, part of the 50S ribosomal subunit.

Its function is as follows. This protein is one of the early assembly proteins of the 50S ribosomal subunit, although it is not seen to bind rRNA by itself. It is important during the early stages of 50S assembly. The chain is Large ribosomal subunit protein uL13 from Clostridium tetani (strain Massachusetts / E88).